A 603-amino-acid polypeptide reads, in one-letter code: NADH-ubiquinone oxidoreductase chain 5 (603 aa).

The next 16 helical transmembrane spans lie at 4–24, 38–58, 89–109, 122–142, 171–191, 211–233, 241–261, 273–293, 301–320, 325–347, 366–386, 405–424, 457–477, 488–508, 537–557, and 582–602; these read FTTMTALTLTSLIPPITATLI, TAIASAFTISLIPTTMFICLG, FLPVALFVTWSIMEFSLWYMA, LIFLITMIILITANNLLQLFI, AILYNRIGDIGFILTLAWFLL, LPLLGLLLAAAGKSAQLGLHPWL, TPVSALLHSSTMVVAGIFLLI, IQTLALCLGAITTLFAAICAL, IVAFSTSSQLGLMMVTIGIN, AFLHICTHAFFKALLFMCSGSII, MPLTSTSLTISSLALAGMPFL, NAWALSITLIATSLTSAYST, LMTGSLFTGFLITSNIPPTSL, LAALTATLLGLLVALDLNYLA, IPHLSLLMSQNLSLLLLDLTW, and GMIKLYFLSFLIPLLLTLLMI.

Belongs to the complex I subunit 5 family. Core subunit of respiratory chain NADH dehydrogenase (Complex I) which is composed of 45 different subunits.

Its subcellular location is the mitochondrion inner membrane. The enzyme catalyses a ubiquinone + NADH + 5 H(+)(in) = a ubiquinol + NAD(+) + 4 H(+)(out). Its function is as follows. Core subunit of the mitochondrial membrane respiratory chain NADH dehydrogenase (Complex I) which catalyzes electron transfer from NADH through the respiratory chain, using ubiquinone as an electron acceptor. Essential for the catalytic activity and assembly of complex I. This is NADH-ubiquinone oxidoreductase chain 5 (MT-ND5) from Pongo pygmaeus (Bornean orangutan).